The following is a 331-amino-acid chain: Flotillin-like protein FloA (331 aa).

Transmembrane regions (helical) follow at residues 6–26 (LMIL…FTFV) and 28–48 (VMLW…TLVG). Positions 236–331 (QTDQAEADKN…KDPSDEDRKS (96 aa)) are required for correct localization. 4 short sequence motifs (EA repeat) span residues 240–242 (AEA), 251–253 (AEE), 278–282 (EAEAE), and 288–290 (AEA). The tract at residues 312–331 (EMRDSFGKLTKDPSDEDRKS) is disordered.

The protein belongs to the flotillin-like FloA family. In terms of assembly, homooligomerizes. Interacts with FloT. Interacts with FtsH midcell. Interacts with PhoR, colocalizes with PhoR in FloA-only membrane rafts.

It is found in the cell membrane. The protein resides in the membrane raft. Found in functional membrane microdomains (FMM) that may be equivalent to eukaryotic membrane rafts. FMMs are highly dynamic and increase in number as cells age. FloA and FloT function is partially redundant; double deletions have marked synthetic phenotypes. Flotillins are thought to be important factors in membrane fluidity, especially during periods of rapid growth in rich media. Whether specific proteins are associated with FMMs is controversial; in one study FloT rafts have been shown to include proteins involved in adaptation to stationary phase, while FloA-FloT rafts include proteins involved in differentiation including sporulation, biofilm formation and DNA uptake competence. Another (more finely resolved) study only showed association of NfeD2 with FloT rafts of all the proteins examined. Involved in spatial organization of membranes, perhaps recruiting proteins to specific membrane regions. Simultaneous overexpression of both FloA and FloT leads to defects in cell division and differentiation, in part caused by stabilization of FtsH and its subsequent increased ability to degrade proteins. Cells make more biofilm, are about half as long, have less EzrA and more frequent Z-rings. The polypeptide is Flotillin-like protein FloA (Bacillus subtilis (strain 168)).